Reading from the N-terminus, the 321-residue chain is Biotin synthase (321 aa).

Positions 37–264 constitute a Radical SAM core domain; it reads RDMELCTLSS…TSVIRLSAGR (228 aa). [4Fe-4S] cluster-binding residues include cysteine 52, cysteine 56, and cysteine 59. Residues cysteine 96, cysteine 127, cysteine 187, and arginine 259 each coordinate [2Fe-2S] cluster.

This sequence belongs to the radical SAM superfamily. Biotin synthase family. Homodimer. Requires [4Fe-4S] cluster as cofactor. [2Fe-2S] cluster is required as a cofactor.

It catalyses the reaction (4R,5S)-dethiobiotin + (sulfur carrier)-SH + 2 reduced [2Fe-2S]-[ferredoxin] + 2 S-adenosyl-L-methionine = (sulfur carrier)-H + biotin + 2 5'-deoxyadenosine + 2 L-methionine + 2 oxidized [2Fe-2S]-[ferredoxin]. Its pathway is cofactor biosynthesis; biotin biosynthesis; biotin from 7,8-diaminononanoate: step 2/2. Functionally, catalyzes the conversion of dethiobiotin (DTB) to biotin by the insertion of a sulfur atom into dethiobiotin via a radical-based mechanism. The chain is Biotin synthase from Coxiella burnetii (strain CbuK_Q154) (Coxiella burnetii (strain Q154)).